The following is a 636-amino-acid chain: 1-deoxy-D-xylulose-5-phosphate synthase (636 aa).

Residues His72 and 113-115 (GHA) contribute to the thiamine diphosphate site. Mg(2+) is bound at residue Asp144. Residues 145–146 (GA), Asn174, Tyr287, and Glu370 contribute to the thiamine diphosphate site. A Mg(2+)-binding site is contributed by Asn174.

It belongs to the transketolase family. DXPS subfamily. As to quaternary structure, homodimer. It depends on Mg(2+) as a cofactor. Requires thiamine diphosphate as cofactor.

The enzyme catalyses D-glyceraldehyde 3-phosphate + pyruvate + H(+) = 1-deoxy-D-xylulose 5-phosphate + CO2. It functions in the pathway metabolic intermediate biosynthesis; 1-deoxy-D-xylulose 5-phosphate biosynthesis; 1-deoxy-D-xylulose 5-phosphate from D-glyceraldehyde 3-phosphate and pyruvate: step 1/1. In terms of biological role, catalyzes the acyloin condensation reaction between C atoms 2 and 3 of pyruvate and glyceraldehyde 3-phosphate to yield 1-deoxy-D-xylulose-5-phosphate (DXP). This Microcystis aeruginosa (strain NIES-843 / IAM M-2473) protein is 1-deoxy-D-xylulose-5-phosphate synthase.